A 227-amino-acid chain; its full sequence is ATP-dependent dethiobiotin synthetase BioD (227 aa).

13-18 contacts ATP; the sequence is DVGKTV. A Mg(2+)-binding site is contributed by Thr17. Lys38 is an active-site residue. ATP contacts are provided by residues Asp55, 116 to 119, 176 to 177, and 205 to 207; these read EGAG, NR, and PYI. The Mg(2+) site is built by Asp55 and Glu116.

It belongs to the dethiobiotin synthetase family. As to quaternary structure, homodimer. It depends on Mg(2+) as a cofactor.

The protein resides in the cytoplasm. The catalysed reaction is (7R,8S)-7,8-diammoniononanoate + CO2 + ATP = (4R,5S)-dethiobiotin + ADP + phosphate + 3 H(+). Its pathway is cofactor biosynthesis; biotin biosynthesis; biotin from 7,8-diaminononanoate: step 1/2. Its function is as follows. Catalyzes a mechanistically unusual reaction, the ATP-dependent insertion of CO2 between the N7 and N8 nitrogen atoms of 7,8-diaminopelargonic acid (DAPA, also called 7,8-diammoniononanoate) to form a ureido ring. This Vibrio vulnificus (strain CMCP6) protein is ATP-dependent dethiobiotin synthetase BioD.